We begin with the raw amino-acid sequence, 522 residues long: Pheromone-processing carboxypeptidase kex1 (522 aa).

An N-terminal signal peptide occupies residues 1–22 (MSLSFLLRVAGLFFLQFNSAQA). Topologically, residues 23 to 478 (KSQVHEQWHV…DPVTIVPNHS (456 aa)) are lumenal. 3 N-linked (GlcNAc...) asparagine glycosylation sites follow: Asn-52, Asn-75, and Asn-104. Ser-177 is a catalytic residue. An N-linked (GlcNAc...) asparagine glycan is attached at Asn-197. Residue Asp-370 is part of the active site. Residues Asn-395, Asn-428, and Asn-436 are each glycosylated (N-linked (GlcNAc...) asparagine). His-439 is an active-site residue. A helical transmembrane segment spans residues 479-499 (FLSIFLWVMAGILAFSAIGAI). Over 500 to 522 (CYYSYRHIRSRYDSYTPIQEESA) the chain is Cytoplasmic.

This sequence belongs to the peptidase S10 family.

The protein localises to the golgi apparatus. It is found in the trans-Golgi network membrane. It carries out the reaction Preferential release of a C-terminal arginine or lysine residue.. In terms of biological role, protease with a carboxypeptidase B-like function involved in the C-terminal processing of the lysine and arginine residues from protein precursors. Promotes cell fusion and is involved in the programmed cell death. The chain is Pheromone-processing carboxypeptidase kex1 (kex1) from Schizosaccharomyces japonicus (strain yFS275 / FY16936) (Fission yeast).